The chain runs to 1302 residues: Multidrug resistance protein 1 (1302 aa).

Residues 43 to 63 (GVFEIILLIIGIIGSIGVGCL) form a helical membrane-spanning segment. The region spanning 51–360 (IIGIIGSIGV…ISTPINILNS (310 aa)) is the ABC transmembrane type-1 1 domain. Asparagine 83 carries an N-linked (GlcNAc...) asparagine glycan. 5 consecutive transmembrane segments (helical) span residues 118–138 (LYFA…FFVL), 192–212 (LFQT…KCWD), 213–233 (LTLV…GLGM), 292–312 (IGIG…NALG), and 331–351 (AGTV…LSQI). Positions 395 to 634 (IRFEDVQFVY…KGTYYGLVKR (240 aa)) constitute an ABC transporter 1 domain. 430 to 437 (GASGCGKS) provides a ligand contact to ATP. A glycan (N-linked (GlcNAc...) asparagine) is linked at asparagine 663. The chain crosses the membrane as a helical span at residues 712–732 (YIFCTLGLIGGIGAGAAFPFY). In terms of domain architecture, ABC transmembrane type-1 2 spans 713–1022 (IFCTLGLIGG…IGNVLPDVGK (310 aa)). Asparagine 751 carries N-linked (GlcNAc...) asparagine glycosylation. Residues 765–785 (MIIICIGIITMISFFCYVGLF) form a helical membrane-spanning segment. N-linked (GlcNAc...) asparagine glycosylation occurs at asparagine 808. The next 2 membrane-spanning stretches (helical) occupy residues 841-861 (VGDI…GLYF) and 862-882 (SWKL…FMFI). The region spanning 1057 to 1296 (IEFKNIHFRY…KGFYYTLAMQ (240 aa)) is the ABC transporter 2 domain. 1092–1099 (GASGCGKS) is a binding site for ATP.

It belongs to the ABC transporter superfamily. ABCB family. Multidrug resistance exporter (TC 3.A.1.201) subfamily.

It is found in the membrane. The enzyme catalyses ATP + H2O + xenobioticSide 1 = ADP + phosphate + xenobioticSide 2.. Energy-dependent efflux pump responsible for decreased drug accumulation in multidrug resistance parasites. This chain is Multidrug resistance protein 1, found in Entamoeba histolytica (strain ATCC 30459 / HM-1:IMSS / ABRM).